We begin with the raw amino-acid sequence, 319 residues long: F-box only protein 8 (319 aa).

The region spanning 68-111 (FINLEMLPPELSFTILSYLNATDLCLASCVWQDLANDELLWQGL) is the F-box domain. The SEC7 domain maps to 146-276 (FNANPDEGVN…LILLSIDLTS (131 aa)).

May promote guanine-nucleotide exchange on an ARF. Promotes the activation of ARF through replacement of GDP with GTP (Potential). This Bos taurus (Bovine) protein is F-box only protein 8 (FBXO8).